Here is a 282-residue protein sequence, read N- to C-terminus: Pantothenate synthetase (282 aa).

31-38 (MGALHDGH) serves as a coordination point for ATP. The active-site Proton donor is the His-38. Gln-62 serves as a coordination point for (R)-pantoate. Beta-alanine is bound at residue Gln-62. 148–151 (GKKD) contributes to the ATP binding site. Gln-154 contributes to the (R)-pantoate binding site. Residues Val-177 and 185–188 (KSSR) each bind ATP.

It belongs to the pantothenate synthetase family. In terms of assembly, homodimer.

The protein localises to the cytoplasm. The catalysed reaction is (R)-pantoate + beta-alanine + ATP = (R)-pantothenate + AMP + diphosphate + H(+). Its pathway is cofactor biosynthesis; (R)-pantothenate biosynthesis; (R)-pantothenate from (R)-pantoate and beta-alanine: step 1/1. Its function is as follows. Catalyzes the condensation of pantoate with beta-alanine in an ATP-dependent reaction via a pantoyl-adenylate intermediate. This chain is Pantothenate synthetase, found in Staphylococcus saprophyticus subsp. saprophyticus (strain ATCC 15305 / DSM 20229 / NCIMB 8711 / NCTC 7292 / S-41).